Consider the following 378-residue polypeptide: MKILVDENMPYARELFSRLGEVKTVPGRPIPVEELNHADALMVRSVTKVNESLLSGTPIKFVGTATAGTDHVDEAWLKQEGIGFSAAPGCNAIAVVEYVFSALLMLAERDGFSLRDRTVGIVGVGNVGSRLQTRLEALGIRTLLCDPPRAARGDEGDFRTMDEVVEEADVLTFHTPLYKDGPYKTLHLVDETLIRRLKPGAILINACRGPVVDNAALLARLTAGQPISVVLDVWEGEPDLNVALLDAVDIGTSHIAGYTLEGKARGTTQVFEAYSAFIGREQHVALETLLPAPEFGRITLHGPLDQPTLKRLAHLVYDVRRDDAPLRKVAGIPGEFDKLRKNYLERREWSSLYVMCDDASAAALLQKLGFNAVHHPAR.

Substrate contacts are provided by S45 and T66. NAD(+)-binding residues include D146 and T175. The active site involves R208. Position 232 (D232) interacts with NAD(+). E237 is a catalytic residue. H254 acts as the Proton donor in catalysis. An NAD(+)-binding site is contributed by G257. Y258 contributes to the substrate binding site.

It belongs to the D-isomer specific 2-hydroxyacid dehydrogenase family. PdxB subfamily. As to quaternary structure, homodimer.

The protein localises to the cytoplasm. The enzyme catalyses 4-phospho-D-erythronate + NAD(+) = (R)-3-hydroxy-2-oxo-4-phosphooxybutanoate + NADH + H(+). The protein operates within cofactor biosynthesis; pyridoxine 5'-phosphate biosynthesis; pyridoxine 5'-phosphate from D-erythrose 4-phosphate: step 2/5. Its function is as follows. Catalyzes the oxidation of erythronate-4-phosphate to 3-hydroxy-2-oxo-4-phosphonooxybutanoate. The sequence is that of Erythronate-4-phosphate dehydrogenase from Salmonella arizonae (strain ATCC BAA-731 / CDC346-86 / RSK2980).